The primary structure comprises 94 residues: MSRSISKGPFVDLHLINKVIVVRKNNDKRPIKTWSRRSTILPDFIGLTISVHNGRQHIPIFITENMVGHKLGEFSHTRTFKGHAGDKKAAGSKR.

The protein belongs to the universal ribosomal protein uS19 family.

Its function is as follows. Protein S19 forms a complex with S13 that binds strongly to the 16S ribosomal RNA. This Nitrosomonas eutropha (strain DSM 101675 / C91 / Nm57) protein is Small ribosomal subunit protein uS19.